The primary structure comprises 1752 residues: MGNSSSTPPPSALKNSDLFKTMLRTQYSGSVKTRRINQDIKKQYPLWPDQGTCATKHWEQAVLIPLDSVSEETAKVLNFLRVKIQARKGETARQMTAHTIKKLIVGTIDKNKQQTEILQKTDESDEEMDTTNTMLFIARNKRERIAQQQQADLAAQQQVLLLQREQQREQREKDIKKRDEKKKKLLPDTTQKVEQTDIGEASSSDASAQKPISTDNNPDLKVDGVLTRSQHTTVPSNITIKKDGTSVQYQHPIRNYPTGEGNLTAQVRNPFRPLELQQLRKDCPALPEGIPQLAEWLTQTMAIYNCDEADVEQLARVIFPTPVRQIAGVINGHAAANTAAKIQNYVTACRQHYPAVCDWGTIQAFTYKPPQTAHEYVKHAEIIFKNNSGLEWQHATVPFINMVVQGLPPKVTRSLMSGNPDWSTKTIPQIIPLMQHYLNLQSRQDAKIKQTPLVLQLAMPAQTMNGNKGYVGSYPTNEPYYSFQQQQRPAPRAPPGNVPSNTCFFCKQPGHWKADCPNKTRNLRNMGNMGRGGRMGGPPYRSQPYPAFIQPPQNHQNQYNGRMDRSQLQASAQEWLPGTYPAXDPIDCPYEKSGTKTTQDVITTKNAEIMVTVNHTKIPMLVDTGACLTAIGGAATVVPDLKLTNTEIIAVGISAEPVPHVLAKPTKIQIENTNIDISPWYNPDQTFHILGRDTLSKMRAIVSFEKNGEMTVLLPPTYHKQLSCQTKNTLNIDEYLLQFPDQLWASLPTDIGRMLVPPITIKIKDNASLPSIRQYPLPKDKTEGLRPLISSLENQGILIKCHSPCNTPIFPIKKAGRDEYRMIHDLRAINNIVAPLTAVVASPTTVLSNLAPSLHWFTVIDLSNAFFSVPIHKDSQYLFAFTFEGHQYTWTVLPQGFIHSPTLFSQALYQSLHKIKFKISSEICIYMDDVLIASKDRDTNLKDTAVMLQHLASEGHKVSKKKLQLCQQEVVYLGQLLTPEGRKILPDRKVTVSQFQQPTTIRQIRAFLGLVGYCRHWIPEFSIHSKFLEKQLKKDTAEPFQLDDQQVEAFNKLKHAITTAPVLVVPDPAKPFQLYTSHSEHASIAVLTQKHAGRTRPIAFLSSKFDAIESGLPPCLKACASIHRSLTQADSFILGAPLIIYTTHAICTLLQRDRSQLVTASRFSKWEADLLRPELTFVACSAVSPAHLYMQSCENNIPPHDCVLLTHTISRPRPDLSDLPIPDPDMTLFSDGSYTTGRGGAAVVMHRPVTDDFIIIHQQPGGASAQTAELLALAAACHLATDKTVNIYTDSRYAYGVVHDFGHLWMHRGFVTSAGTPIKNHKEIEYLLKQIMKPKQVSVIKIEAHTKGVSMEVRGNAAADEAAKNAVFLVQRVLKKGDALASTDLVMEYSETDEKFTAGAELHDGVFMRGDLIVPPLEMLHAILLAIHGVSHTHKGGIMSYFSKFWTHPKASQTIDLILGHCQICLKHNPKYKSRLQGHRPLPSRPFAHLQIDFVQMCVKKPMYALVIIDVFSKWPEIIPCNKEDAKTVCDILMKDIIPRWGLPDQIDSDQGTHFTAKISQELTHSIGVAWKLHCPGHPRSSGIVERTNRTLKSKIIKAQEQLQLSKWTEVLPYVLLEMRATPKKHGLSPHEIVMGRPMKTTYLSDMSPLWATDTLVTYMNKLTRQLSAYHQQVVDQWPSTSLPPGPEPGSWCMLRNPKKSSNWEGPFLILLSTPTAVKVEGRPTWIHLDHCKLLRSSLSSSLGGPVNQLLS.

Gly2 is lipidated: N-myristoyl glycine; by host. The stretch at 154 to 185 (AAQQQVLLLQREQQREQREKDIKKRDEKKKKL) forms a coiled coil. The span at 168–178 (REQREKDIKKR) shows a compositional bias: basic and acidic residues. The segment at 168-222 (REQREKDIKKRDEKKKKLLPDTTQKVEQTDIGEASSSDASAQKPISTDNNPDLKV) is disordered. Polar residues predominate over residues 201–217 (ASSSDASAQKPISTDNN). The segment at 501–518 (NTCFFCKQPGHWKADCPN) adopts a CCHC-type zinc-finger fold. The Peptidase A2 domain occupies 618 to 694 (IPMLVDTGAC…QTFHILGRDT (77 aa)). Asp623 acts as the Protease; shared with dimeric partner in catalysis. The 185-residue stretch at 793–977 (ENQGILIKCH…QEVVYLGQLL (185 aa)) folds into the Reverse transcriptase domain. Positions 861, 928, 929, 1231, 1269, 1290, 1360, 1493, and 1550 each coordinate Mg(2+). The 147-residue stretch at 1222 to 1368 (PDPDMTLFSD…ADEAAKNAVF (147 aa)) folds into the RNase H type-1 domain. Residues 1482 to 1638 (LPSRPFAHLQ…SPHEIVMGRP (157 aa)) enclose the Integrase catalytic domain.

Homohexamer. Further associates as homomultimer. The virus core is composed of a lattice formed from hexagonal rings, each containing six capsid monomers. The protease is a homodimer, whose active site consists of two apposed aspartic acid residues. The reverse transcriptase is a monomer. It depends on Mg(2+) as a cofactor. In terms of processing, specific enzymatic cleavages by the viral protease yield mature proteins. The protease is released by autocatalytic cleavage. The polyprotein is cleaved during and after budding, this process is termed maturation.

The protein localises to the host cell membrane. The protein resides in the virion. It carries out the reaction DNA(n) + a 2'-deoxyribonucleoside 5'-triphosphate = DNA(n+1) + diphosphate. It catalyses the reaction Endonucleolytic cleavage to 5'-phosphomonoester.. Targets Gag and gag-pol polyproteins to the plasma membrane via a multipartite membrane binding signal, that includes its myristoylated N-terminus. Also mediates nuclear localization of the pre-integration complex. Its function is as follows. Capsid protein p25 forms the spherical core of the virion that encapsulates the genomic RNA-nucleocapsid complex. In terms of biological role, involved in the packaging and encapsidation of two copies of the genome. Binds with high affinity to conserved UCUG elements within the packaging signal, located near the 5'-end of the genome. This binding is dependent on genome dimerization. Functionally, mediates proteolytic cleavages of Gag and Gag-Pol polyproteins during or shortly after the release of the virion from the plasma membrane. Cleavages take place as an ordered, step-wise cascade to yield mature proteins. This process is called maturation. Displays maximal activity during the budding process just prior to particle release from the cell. Is a multifunctional enzyme that converts the viral dimeric RNA genome into dsDNA in the cytoplasm, shortly after virus entry into the cell. This enzyme displays a DNA polymerase activity that can copy either DNA or RNA templates, and a ribonuclease H (RNase H) activity that cleaves the RNA strand of RNA-DNA heteroduplexes in a partially processive 3' to 5' endonucleasic mode. Conversion of viral genomic RNA into dsDNA requires many steps. A tRNA binds to the primer-binding site (PBS) situated at the 5' end of the viral RNA. RT uses the 3' end of the tRNA primer to perform a short round of RNA-dependent minus-strand DNA synthesis. The reading proceeds through the U5 region and ends after the repeated (R) region which is present at both ends of viral RNA. The portion of the RNA-DNA heteroduplex is digested by the RNase H, resulting in a ssDNA product attached to the tRNA primer. This ssDNA/tRNA hybridizes with the identical R region situated at the 3' end of viral RNA. This template exchange, known as minus-strand DNA strong stop transfer, can be either intra- or intermolecular. RT uses the 3' end of this newly synthesized short ssDNA to perform the RNA-dependent minus-strand DNA synthesis of the whole template. RNase H digests the RNA template except for a polypurine tract (PPT) situated at the 5' end of the genome. It is not clear if both polymerase and RNase H activities are simultaneous. RNase H probably can proceed both in a polymerase-dependent (RNA cut into small fragments by the same RT performing DNA synthesis) and a polymerase-independent mode (cleavage of remaining RNA fragments by free RTs). Secondly, RT performs DNA-directed plus-strand DNA synthesis using the PPT that has not been removed by RNase H as primers. PPT and tRNA primers are then removed by RNase H. The 3' and 5' ssDNA PBS regions hybridize to form a circular dsDNA intermediate. Strand displacement synthesis by RT to the PBS and PPT ends produces a blunt ended, linear dsDNA copy of the viral genome that includes long terminal repeats (LTRs) at both ends. Its function is as follows. Catalyzes viral DNA integration into the host chromosome, by performing a series of DNA cutting and joining reactions. This enzyme activity takes place after virion entry into a cell and reverse transcription of the RNA genome in dsDNA. The first step in the integration process is 3' processing. This step requires a complex comprising the viral genome, matrix protein and integrase. This complex is called the pre-integration complex (PIC). The integrase protein removes 2 nucleotides from each 3' end of the viral DNA, leaving recessed CA OH's at the 3' ends. In the second step that requires cell division, the PIC enters cell nucleus. In the third step, termed strand transfer, the integrase protein joins the previously processed 3' ends to the 5' ends of strands of target cellular DNA at the site of integration. The last step is viral DNA integration into host chromosome. In terms of biological role, plays a role in budding and is processed by the viral protease during virion maturation outside the cell. The chain is Gag-Pol polyprotein (gag-pol) from Walleye dermal sarcoma virus (WDSV).